The following is a 103-amino-acid chain: Small ribosomal subunit protein uS10 (103 aa).

The protein belongs to the universal ribosomal protein uS10 family. Part of the 30S ribosomal subunit.

Involved in the binding of tRNA to the ribosomes. This chain is Small ribosomal subunit protein uS10, found in Leptothrix cholodnii (strain ATCC 51168 / LMG 8142 / SP-6) (Leptothrix discophora (strain SP-6)).